A 92-amino-acid polypeptide reads, in one-letter code: uncharacterized protein (92 aa).

The interval 25 to 53 (AGRGVRREARDTPCRGTAEGLATSQPEDG) is disordered.

This is an uncharacterized protein from Treponema pallidum (strain Nichols).